A 288-amino-acid chain; its full sequence is MKQYLDLARHIMENGTLKSDRTGTGTKSIFGYQMFFDLKDGFPLLTTKKTFLKGIIHELLWFIKGDTNIKYLVDNNVGIWTDWPYKNYMNSSEYQGESIKEFSDKIRQSDEFAKKWGDLGPVYGSQWRNFNGVDQIEYIINTLKTNPDSRRMVLSAWNPAEIGQMMLPPCHTLIQFYVVDNKLSLQLYQRSGDVFLGIPFNIASYAVFLMMVAQVTGFELGSFVHTIGDAHIYTNHFDQINLQLTRTPRRLPILKINKSITRLEDFKYEDFELVGYDPYPPIKGVVAV.

Residues R21 and R150–R151 contribute to the dUMP site. C170 (nucleophile) is an active-site residue. Residues R190–D193, N201, and H231–Y233 contribute to the dUMP site. Position 193 (D193) interacts with (6R)-5,10-methylene-5,6,7,8-tetrahydrofolate. A287 provides a ligand contact to (6R)-5,10-methylene-5,6,7,8-tetrahydrofolate.

Belongs to the thymidylate synthase family. Bacterial-type ThyA subfamily. In terms of assembly, homodimer.

The protein resides in the cytoplasm. The enzyme catalyses dUMP + (6R)-5,10-methylene-5,6,7,8-tetrahydrofolate = 7,8-dihydrofolate + dTMP. Its pathway is pyrimidine metabolism; dTTP biosynthesis. Functionally, catalyzes the reductive methylation of 2'-deoxyuridine-5'-monophosphate (dUMP) to 2'-deoxythymidine-5'-monophosphate (dTMP) while utilizing 5,10-methylenetetrahydrofolate (mTHF) as the methyl donor and reductant in the reaction, yielding dihydrofolate (DHF) as a by-product. This enzymatic reaction provides an intracellular de novo source of dTMP, an essential precursor for DNA biosynthesis. The chain is Thymidylate synthase from Acholeplasma laidlawii (strain PG-8A).